A 429-amino-acid chain; its full sequence is Light-independent protochlorophyllide reductase subunit N (429 aa).

The [4Fe-4S] cluster site is built by C32, C57, and C118.

Belongs to the BchN/ChlN family. As to quaternary structure, protochlorophyllide reductase is composed of three subunits; BchL, BchN and BchB. Forms a heterotetramer of two BchB and two BchN subunits. It depends on [4Fe-4S] cluster as a cofactor.

The catalysed reaction is chlorophyllide a + oxidized 2[4Fe-4S]-[ferredoxin] + 2 ADP + 2 phosphate = protochlorophyllide a + reduced 2[4Fe-4S]-[ferredoxin] + 2 ATP + 2 H2O. It participates in porphyrin-containing compound metabolism; bacteriochlorophyll biosynthesis (light-independent). Functionally, component of the dark-operative protochlorophyllide reductase (DPOR) that uses Mg-ATP and reduced ferredoxin to reduce ring D of protochlorophyllide (Pchlide) to form chlorophyllide a (Chlide). This reaction is light-independent. The NB-protein (BchN-BchB) is the catalytic component of the complex. The chain is Light-independent protochlorophyllide reductase subunit N from Rhodopseudomonas palustris (strain TIE-1).